A 118-amino-acid polypeptide reads, in one-letter code: Ribulose bisphosphate carboxylase small subunit (118 aa).

It belongs to the RuBisCO small chain family. Heterohexadecamer of 8 large and 8 small subunits.

RuBisCO catalyzes two reactions: the carboxylation of D-ribulose 1,5-bisphosphate, the primary event in carbon dioxide fixation, as well as the oxidative fragmentation of the pentose substrate. Both reactions occur simultaneously and in competition at the same active site. Although the small subunit is not catalytic it is essential for maximal activity. In Thiobacillus denitrificans (strain ATCC 25259 / T1), this protein is Ribulose bisphosphate carboxylase small subunit.